Reading from the N-terminus, the 127-residue chain is uncharacterized protein (127 aa).

This is an uncharacterized protein from Bacillus subtilis (strain 168).